The chain runs to 375 residues: Protein kinase MCK1 (375 aa).

Position 2 is an N-acetylserine (Ser2). A Protein kinase domain is found at 35–327 (VKEYRKIGRG…PRRILAHQFF (293 aa)). ATP-binding positions include 41 to 49 (IGRGAFGTV) and Lys68. Asp164 functions as the Proton acceptor in the catalytic mechanism. Ser198 carries the post-translational modification Phosphoserine. Phosphotyrosine is present on Tyr199. Ser202 is subject to Phosphoserine.

Belongs to the protein kinase superfamily. Ser/Thr protein kinase family. Phosphorylated at tyrosine and serine.

The catalysed reaction is L-seryl-[protein] + ATP = O-phospho-L-seryl-[protein] + ADP + H(+). The enzyme catalyses L-threonyl-[protein] + ATP = O-phospho-L-threonyl-[protein] + ADP + H(+). It catalyses the reaction L-tyrosyl-[protein] + ATP = O-phospho-L-tyrosyl-[protein] + ADP + H(+). Functionally, may be an autophosphorylating tyrosine kinase, a bifunctional (serine/tyrosine-specific) protein kinase, or a serine kinase that is a substrate for an associated tyrosine kinase. MCK1 is a transcriptional activator of IME1, it stimulates spore maturation, and play a positive regulatory role in both mitotic centromere function and activation of early meiotic gene expression. The polypeptide is Protein kinase MCK1 (MCK1) (Saccharomyces cerevisiae (strain ATCC 204508 / S288c) (Baker's yeast)).